The following is a 701-amino-acid chain: MARTTPIGRYRNIGIVAHVDAGKTTTTERVLFYTGKSHKMGEVHDGAATTDWMVQEQERGITITSAAITAFWQGSEKQHKDQFRFNVIDTPGHVDFTIEVERSLRVLDGAVVVFCGTSGVEPQSETVWRQANKYGVPRIVYVNKMDRAGANFLRVIAQIKQRLGHTPVPIQLAIGAEDNFQGQIDLMSMEAVYWNDADKGMVPVRKPIPAELQELADEWRSNMVEAAAEASEELMNKYVDGEELTNDEIKAALRQRTIAGEIVLAVCGSSFKNKGVPLVLDAVIDYLPAPTDIPAIKGSDPDNEEKLMERHADDNEPFSALAFKIATDPFVGTLTFVRVYSGVLASGDGVINSVKGKKERVGRMVQMHANAREEIKEVRAGDIAALIGMKDVTTGETLCNADKPIILVRMDFPEPVISVAVEPKTKDDQEKMGIALGKLAQEDPSFRVKTDEETGQTIISGMGELHLDILVDRMRREFNVEANIGKPQVSYRERITKNCEIEGKFVRQSGGRGQFGHCWIRFAPADEGQEGLQFVNEVVGGVVPKEYIPAIQKGIEEQMKNGVVAGYPLIGLKATVFDGSYHDVDSNEMAFKVAASMATKQLAQKGGGELLEPIMAVEVVTPEDYMGDVMGDLNRRRGMILGMEDTVSGKVIRAEVPLGEMFGYATDVRSMSQGRASYSMEFKKYNTAPSHIVETVTKKQG.

The 284-residue stretch at 8-291 (GRYRNIGIVA…AVIDYLPAPT (284 aa)) folds into the tr-type G domain. Residues 17–24 (AHVDAGKT), 89–93 (DTPGH), and 143–146 (NKMD) contribute to the GTP site.

Belongs to the TRAFAC class translation factor GTPase superfamily. Classic translation factor GTPase family. EF-G/EF-2 subfamily.

Its subcellular location is the cytoplasm. Functionally, catalyzes the GTP-dependent ribosomal translocation step during translation elongation. During this step, the ribosome changes from the pre-translocational (PRE) to the post-translocational (POST) state as the newly formed A-site-bound peptidyl-tRNA and P-site-bound deacylated tRNA move to the P and E sites, respectively. Catalyzes the coordinated movement of the two tRNA molecules, the mRNA and conformational changes in the ribosome. The protein is Elongation factor G of Pseudomonas syringae pv. syringae (strain B728a).